The sequence spans 365 residues: Peptide chain release factor 2 (365 aa).

At Gln252 the chain carries N5-methylglutamine.

It belongs to the prokaryotic/mitochondrial release factor family. Post-translationally, methylated by PrmC. Methylation increases the termination efficiency of RF2.

It is found in the cytoplasm. Functionally, peptide chain release factor 2 directs the termination of translation in response to the peptide chain termination codons UGA and UAA. In Escherichia coli O9:H4 (strain HS), this protein is Peptide chain release factor 2.